We begin with the raw amino-acid sequence, 269 residues long: Energy-coupling factor transporter ATP-binding protein EcfA1 (269 aa).

In terms of domain architecture, ABC transporter spans 8–242 (IVFKNVSFQY…AEELTTIGLD (235 aa)). ATP is bound at residue 42–49 (GHNGSGKS).

The protein belongs to the ABC transporter superfamily. Energy-coupling factor EcfA family. As to quaternary structure, forms a stable energy-coupling factor (ECF) transporter complex composed of 2 membrane-embedded substrate-binding proteins (S component), 2 ATP-binding proteins (A component) and 2 transmembrane proteins (T component).

It is found in the cell membrane. Functionally, ATP-binding (A) component of a common energy-coupling factor (ECF) ABC-transporter complex. Unlike classic ABC transporters this ECF transporter provides the energy necessary to transport a number of different substrates. This chain is Energy-coupling factor transporter ATP-binding protein EcfA1, found in Staphylococcus aureus (strain MRSA252).